A 141-amino-acid polypeptide reads, in one-letter code: Putative pre-16S rRNA nuclease (141 aa).

Belongs to the YqgF nuclease family.

The protein resides in the cytoplasm. Could be a nuclease involved in processing of the 5'-end of pre-16S rRNA. The sequence is that of Putative pre-16S rRNA nuclease from Shewanella denitrificans (strain OS217 / ATCC BAA-1090 / DSM 15013).